The primary structure comprises 715 residues: Fatty acid oxidation complex subunit alpha (715 aa).

The tract at residues 1–190 (MIYEGKAITV…KVGAVDAVVA (190 aa)) is enoyl-CoA hydratase/isomerase. Asp297 provides a ligand contact to substrate. Residues 312 to 715 (HDVKQAAVLG…MAKNGQRFFN (404 aa)) form a 3-hydroxyacyl-CoA dehydrogenase region. NAD(+)-binding positions include Met325, Asp344, 401-403 (VVE), Lys408, and Ser430. Catalysis depends on His451, which acts as the For 3-hydroxyacyl-CoA dehydrogenase activity. Position 454 (Asn454) interacts with NAD(+). Positions 501 and 660 each coordinate substrate.

The protein in the N-terminal section; belongs to the enoyl-CoA hydratase/isomerase family. This sequence in the C-terminal section; belongs to the 3-hydroxyacyl-CoA dehydrogenase family. Heterotetramer of two alpha chains (FadB) and two beta chains (FadA).

The catalysed reaction is a (3S)-3-hydroxyacyl-CoA + NAD(+) = a 3-oxoacyl-CoA + NADH + H(+). It catalyses the reaction a (3S)-3-hydroxyacyl-CoA = a (2E)-enoyl-CoA + H2O. The enzyme catalyses a 4-saturated-(3S)-3-hydroxyacyl-CoA = a (3E)-enoyl-CoA + H2O. It carries out the reaction (3S)-3-hydroxybutanoyl-CoA = (3R)-3-hydroxybutanoyl-CoA. The catalysed reaction is a (3Z)-enoyl-CoA = a 4-saturated (2E)-enoyl-CoA. It catalyses the reaction a (3E)-enoyl-CoA = a 4-saturated (2E)-enoyl-CoA. Its pathway is lipid metabolism; fatty acid beta-oxidation. Its function is as follows. Involved in the aerobic and anaerobic degradation of long-chain fatty acids via beta-oxidation cycle. Catalyzes the formation of 3-oxoacyl-CoA from enoyl-CoA via L-3-hydroxyacyl-CoA. It can also use D-3-hydroxyacyl-CoA and cis-3-enoyl-CoA as substrate. The chain is Fatty acid oxidation complex subunit alpha from Pseudomonas putida (strain GB-1).